The chain runs to 170 residues: Large ribosomal subunit protein uL10 (170 aa).

It belongs to the universal ribosomal protein uL10 family. Part of the ribosomal stalk of the 50S ribosomal subunit. The N-terminus interacts with L11 and the large rRNA to form the base of the stalk. The C-terminus forms an elongated spine to which L12 dimers bind in a sequential fashion forming a multimeric L10(L12)X complex.

Functionally, forms part of the ribosomal stalk, playing a central role in the interaction of the ribosome with GTP-bound translation factors. The sequence is that of Large ribosomal subunit protein uL10 from Lactobacillus acidophilus (strain ATCC 700396 / NCK56 / N2 / NCFM).